The chain runs to 512 residues: MYTSHEDIGYDLEDDRKAKNKKTLKPHPDIDGGWAWMMVLSSFFVHILIMGSQMALGVLNVEWLEEFHQSRGLTAWVSSLSMGITLIVGPFIGLFINTCGCRQTAIIGGLVNSLGWVLSAYAANVQSLFITFGVAAGLGSGMAYLPAVVMVGRYFQKRRALAQGLSTTGTGFGTFLMTVLLKYLCAEYGWRNAMFIQGALSLNLCVCGALMRPLSPEKLENCPEAEEPCALPAYSTESVKSGGPLGMAEEQDRRPGNEEMVCDLQTQECQGQTHPRKNVCAFRVLKTVSQLTVQVRRGFRDWHSGYFGTASLFTNRMFVAFIFWALFAYSSFVIPFIHLPEIVSLYNLSEQNDTFPLTSIIAILHIFGKVILGAVADLPCISVWNVFLIANFTLVLSIFLLPLMHTYASLAVICALIGFSSGYFSLMPVVTEDLVGTEHLANAYGIIICANGISALLGPPFAGWIFDITQKYDFSFYICGLLYMVGILFLLIQPCIQMIDQSRRKCIEGAHV.

Topologically, residues 1–29 (MYTSHEDIGYDLEDDRKAKNKKTLKPHPD) are cytoplasmic. The next 12 helical transmembrane spans lie at 30 to 50 (IDGG…ILIM), 76 to 96 (WVSS…GLFI), 105 to 125 (AIIG…AANV), 129 to 149 (FITF…PAVV), 161 to 181 (LAQG…TVLL), 193 to 211 (AMFI…GALM), 317 to 337 (MFVA…IPFI), 355 to 375 (FPLT…LGAV), 381 to 401 (ISVW…IFLL), 410 to 430 (LAVI…MPVV), 446 to 466 (IIIC…GWIF), and 476 to 496 (FYIC…QPCI). Residues 497–512 (QMIDQSRRKCIEGAHV) lie on the Cytoplasmic side of the membrane.

This sequence belongs to the major facilitator superfamily. Monocarboxylate porter (TC 2.A.1.13) family.

The protein localises to the cell membrane. Functionally, proton-linked monocarboxylate transporter. May catalyze the transport of monocarboxylates across the plasma membrane. This Mus musculus (Mouse) protein is Monocarboxylate transporter 14 (Slc16a14).